The primary structure comprises 264 residues: Somatomedin-B and thrombospondin type-1 domain-containing protein (264 aa).

The N-terminal stretch at 1-20 is a signal peptide; that stretch reads MRTLWMALCALSRLWPGAQA. The region spanning 24–75 is the SMB domain; it reads EAGRCCPGRDPACFARGWRLDRVYGTCFCDQACRFTGDCCFDYDRACPARPC. 7 disulfide bridges follow: Cys-28/Cys-36, Cys-28/Cys-52, Cys-36/Cys-70, Cys-50/Cys-52, Cys-50/Cys-63, Cys-56/Cys-62, and Cys-63/Cys-70. A TSP type-1 domain is found at 74–127; it reads PCFVGEWSPWSGCADQCKPTTRVRRRSVQQEPQNGGAPCPPLEERAGCLEYSTP. Asn-227 is a glycosylation site (N-linked (GlcNAc...) asparagine).

It belongs to the thrombospondin family. In terms of tissue distribution, detected in aorta extracellular matrix (at protein level).

It is found in the secreted. It localises to the extracellular space. The protein resides in the extracellular matrix. This Homo sapiens (Human) protein is Somatomedin-B and thrombospondin type-1 domain-containing protein (SBSPON).